The following is a 283-amino-acid chain: Elongation factor Ts (283 aa).

The tract at residues 80–83 (TDFV) is involved in Mg(2+) ion dislocation from EF-Tu.

Belongs to the EF-Ts family.

It is found in the cytoplasm. Its function is as follows. Associates with the EF-Tu.GDP complex and induces the exchange of GDP to GTP. It remains bound to the aminoacyl-tRNA.EF-Tu.GTP complex up to the GTP hydrolysis stage on the ribosome. The polypeptide is Elongation factor Ts (Actinobacillus succinogenes (strain ATCC 55618 / DSM 22257 / CCUG 43843 / 130Z)).